The primary structure comprises 683 residues: Leucine-rich repeat protein soc-2 homolog (683 aa).

Over residues 1–19 the composition is skewed to low complexity; that stretch reads MNLCSSGATASTTSLSSTG. Disordered regions lie at residues 1–54 and 74–150; these read MNLC…SDVS and GTDE…IQAD. The span at 26–49 shows a compositional bias: gly residues; sequence GVPGGGAEGGGGGGGSGNSGGGGK. Residues 74–86 are compositionally biased toward low complexity; sequence GTDELSNANSPAN. Residues 99–117 are compositionally biased toward polar residues; the sequence is QQPTGSNGHSHLHNENNAN. LRR repeat units lie at residues 164-185, 187-208, 210-231, 233-254, 256-277, 279-300, 302-323, 325-346, 348-370, 371-392, 395-416, 419-440, 443-464, 466-487, 489-510, 512-533, 535-556, 558-579, 581-603, and 605-626; these read GIKRLDLSKSSITVIPSTVKEC, HLTELYLYSNKIGQLPPEIGCL, SLRNLALNENSLTSLPESLQNC, QLKVLDLRHNKLAEIPSVIYRL, SLTTLYLRFNRITAVADDLRQL, NLTMLSLRENKIRELGSAIGAL, NLTTLDVSHNHLEHLPEDIGNC, NLSALDLQHNELLDIPDSIGNL, SLVRLGMRYNRLSSVPATLKNCK, SMDEFNVEGNGITQLPDGMLAS, GLTTITLSRNQFASYPTGGPAQ, NVYSINLEHNRIDKIPYGIFSR, GLTKLNMKENMLTALPLDIGTW, NMVELNLATNALQKLPDDIMNL, NLEILILSNNMLKKIPNTIGNL, RLRILDLEENRIEVLPHEIGLL, ELQRLILQTNQITMLPRSIGHL, NLTHLSVSENNLQFLPEEIGSL, SLENLYINQNPGLEKLPFELALC, and NLKYLNIDKCPLSTIPPEIQAG. Residues 661 to 671 are compositionally biased toward gly residues; that stretch reads AGGNGGGGAAA. Residues 661–683 are disordered; it reads AGGNGGGGAAAAGGSASRSSDRR. Residues 672–683 are compositionally biased toward low complexity; it reads AGGSASRSSDRR.

This sequence belongs to the SHOC2 family.

Functionally, acts as a Ras effector and participates in MAPK pathway activation. Probably acts as a regulatory subunit of protein phosphatase that specifically dephosphorylates Raf kinase and stimulate Raf activity at specialized signaling complexes upon Ras activation. The polypeptide is Leucine-rich repeat protein soc-2 homolog (Sur-8) (Drosophila sechellia (Fruit fly)).